Here is a 78-residue protein sequence, read N- to C-terminus: Acyl carrier protein (78 aa).

The region spanning Ser-2 to Thr-77 is the Carrier domain. Ser-37 is subject to O-(pantetheine 4'-phosphoryl)serine.

Belongs to the acyl carrier protein (ACP) family. In terms of processing, 4'-phosphopantetheine is transferred from CoA to a specific serine of apo-ACP by AcpS. This modification is essential for activity because fatty acids are bound in thioester linkage to the sulfhydryl of the prosthetic group.

Its subcellular location is the cytoplasm. It participates in lipid metabolism; fatty acid biosynthesis. In terms of biological role, carrier of the growing fatty acid chain in fatty acid biosynthesis. In Chelativorans sp. (strain BNC1), this protein is Acyl carrier protein.